The chain runs to 104 residues: Zinc finger C2H2 protein ECU02_0310 (104 aa).

The segment at 56–80 adopts a C2H2-type zinc-finger fold; sequence FYCCECDRHFITEKVLMEHKRSNPH.

Belongs to the ZNF593/BUD20 C2H2-type zinc-finger protein family. Associates with pre-60S ribosomal particles; released from the pre-60S particle very early in the cytoplasm.

The protein resides in the nucleus. It localises to the cytoplasm. Its function is as follows. Involved in pre-60S ribosomal particles maturation by promoting the nuclear export of the 60S ribosome. The polypeptide is Zinc finger C2H2 protein ECU02_0310 (Encephalitozoon cuniculi (strain GB-M1) (Microsporidian parasite)).